A 481-amino-acid polypeptide reads, in one-letter code: Glycosyl hydrolase family 109 protein 1 (481 aa).

Residues 1-29 constitute a signal peptide (tat-type signal); sequence MDNSSSRRRFLQTLGLATGALAAGSFANA. NAD(+) is bound by residues 84-85, aspartate 106, 155-158, 175-176, and asparagine 204; these read ER, WEWH, and EV. Residues tyrosine 233, arginine 252, 264–267, and tyrosine 347 contribute to the substrate site; that span reads YPTH. Residue tyrosine 264 participates in NAD(+) binding.

It belongs to the Gfo/Idh/MocA family. Glycosyl hydrolase 109 subfamily. The cofactor is NAD(+). In terms of processing, predicted to be exported by the Tat system. The position of the signal peptide cleavage has not been experimentally proven.

Functionally, glycosidase. The sequence is that of Glycosyl hydrolase family 109 protein 1 from Akkermansia muciniphila (strain ATCC BAA-835 / DSM 22959 / JCM 33894 / BCRC 81048 / CCUG 64013 / CIP 107961 / Muc).